A 382-amino-acid polypeptide reads, in one-letter code: Carbamoyl phosphate synthase small chain (382 aa).

Positions 1–189 (MIKSALLVLE…GLPEAKKEDE (189 aa)) are CPSase. S47, G241, and G243 together coordinate L-glutamine. Residues 193 to 380 (HVVAYDFGAK…IALIEQYRKT (188 aa)) enclose the Glutamine amidotransferase type-1 domain. C269 functions as the Nucleophile in the catalytic mechanism. 5 residues coordinate L-glutamine: L270, Q273, N311, G313, and F314. Catalysis depends on residues H353 and E355.

The protein belongs to the CarA family. As to quaternary structure, composed of two chains; the small (or glutamine) chain promotes the hydrolysis of glutamine to ammonia, which is used by the large (or ammonia) chain to synthesize carbamoyl phosphate. Tetramer of heterodimers (alpha,beta)4.

The catalysed reaction is hydrogencarbonate + L-glutamine + 2 ATP + H2O = carbamoyl phosphate + L-glutamate + 2 ADP + phosphate + 2 H(+). It catalyses the reaction L-glutamine + H2O = L-glutamate + NH4(+). It participates in amino-acid biosynthesis; L-arginine biosynthesis; carbamoyl phosphate from bicarbonate: step 1/1. The protein operates within pyrimidine metabolism; UMP biosynthesis via de novo pathway; (S)-dihydroorotate from bicarbonate: step 1/3. Small subunit of the glutamine-dependent carbamoyl phosphate synthetase (CPSase). CPSase catalyzes the formation of carbamoyl phosphate from the ammonia moiety of glutamine, carbonate, and phosphate donated by ATP, constituting the first step of 2 biosynthetic pathways, one leading to arginine and/or urea and the other to pyrimidine nucleotides. The small subunit (glutamine amidotransferase) binds and cleaves glutamine to supply the large subunit with the substrate ammonia. This is Carbamoyl phosphate synthase small chain from Escherichia coli O6:H1 (strain CFT073 / ATCC 700928 / UPEC).